Here is a 309-residue protein sequence, read N- to C-terminus: GTP cyclohydrolase MptA 2 (309 aa).

Belongs to the GTP cyclohydrolase IV family. As to quaternary structure, homodimer. The cofactor is Fe(2+).

It catalyses the reaction GTP + H2O = 7,8-dihydroneopterin 2',3'-cyclic phosphate + formate + diphosphate + H(+). It participates in cofactor biosynthesis; 5,6,7,8-tetrahydromethanopterin biosynthesis. Converts GTP to 7,8-dihydro-D-neopterin 2',3'-cyclic phosphate, the first intermediate in the biosynthesis of coenzyme methanopterin. The protein is GTP cyclohydrolase MptA 2 of Methanocella arvoryzae (strain DSM 22066 / NBRC 105507 / MRE50).